A 333-amino-acid chain; its full sequence is GTPase Obg (333 aa).

Residues 1–159 form the Obg domain; sequence MKFIDEATIT…ATVRLELKLL (159 aa). Positions 63–85 are disordered; it reads KQFAAPNGAPGEGRQKTGKSGDD. Residues 75–84 are compositionally biased toward basic and acidic residues; it reads GRQKTGKSGD. Residues 160-329 enclose the OBG-type G domain; that stretch reads ADVGLIGLPN…LKKHLFELLC (170 aa). GTP contacts are provided by residues 166-173, 191-195, 213-216, 283-286, and 310-312; these read GLPNAGKS, FTTLS, DIPG, NKMD, and SAA. Mg(2+) contacts are provided by Ser-173 and Thr-193.

Belongs to the TRAFAC class OBG-HflX-like GTPase superfamily. OBG GTPase family. As to quaternary structure, monomer. Mg(2+) serves as cofactor.

The protein resides in the cytoplasm. In terms of biological role, an essential GTPase which binds GTP, GDP and possibly (p)ppGpp with moderate affinity, with high nucleotide exchange rates and a fairly low GTP hydrolysis rate. Plays a role in control of the cell cycle, stress response, ribosome biogenesis and in those bacteria that undergo differentiation, in morphogenesis control. The sequence is that of GTPase Obg from Desulfosudis oleivorans (strain DSM 6200 / JCM 39069 / Hxd3) (Desulfococcus oleovorans).